A 359-amino-acid polypeptide reads, in one-letter code: Guanine nucleotide-binding protein G(q) subunit alpha (359 aa).

Residues cysteine 9 and cysteine 10 are each lipidated (S-palmitoyl cysteine). The G-alpha domain occupies 38–359 (RELKLLLLGT…QLNLKEYNLV (322 aa)). Positions 41–54 (KLLLLGTGESGKST) are G1 motif. Residues serine 50, glycine 51, lysine 52, serine 53, threonine 54, serine 156, leucine 180, arginine 181, and arginine 183 each coordinate GTP. Serine 53 contacts Mg(2+). The segment at 178-186 (DVLRVRVPT) is G2 motif. Threonine 186 provides a ligand contact to Mg(2+). Positions 201–210 (FRMVDVGGQR) are G3 motif. Glutamine 209 is modified (5-glutamyl histamine). The G4 motif stretch occupies residues 270–277 (ILFLNKKD). Residues asparagine 274, lysine 275, aspartate 277, and alanine 331 each contribute to the GTP site. The interval 329-334 (TCATDT) is G5 motif.

This sequence belongs to the G-alpha family. G(q) subfamily. In terms of assembly, g proteins are composed of 3 units; alpha, beta and gamma. The alpha chain contains the guanine nucleotide binding site. Interacts (GDP-bound form) with RIC8A (via C-terminus); promoting GNAQ folding and association with the plasma membrane. Binds NHERF1. Forms a complex with PECAM1 and BDKRB2. Interacts with GAS2L2. In terms of processing, palmitoylated by ZDHHC3 and ZDHHC7. Palmitoylation occurs in the Golgi and participates in the localization of GNAQ to the plasma membrane. Post-translationally, histaminylated at Gln-209 residues by TGM2.

The protein resides in the cell membrane. It is found in the golgi apparatus. The protein localises to the nucleus. It localises to the nucleus membrane. It catalyses the reaction GTP + H2O = GDP + phosphate + H(+). Functionally, guanine nucleotide-binding proteins (G proteins) function as transducers downstream of G protein-coupled receptors (GPCRs) in numerous signaling cascades. The alpha chain contains the guanine nucleotide binding site and alternates between an active, GTP-bound state and an inactive, GDP-bound state. Signaling by an activated GPCR promotes GDP release and GTP binding. The alpha subunit has a low GTPase activity that converts bound GTP to GDP, thereby terminating the signal. Both GDP release and GTP hydrolysis are modulated by numerous regulatory proteins. Signaling is mediated via phospholipase C-beta-dependent inositol lipid hydrolysis for signal propagation: activates phospholipase C-beta: following GPCR activation, GNAQ activates PLC-beta (PLCB1, PLCB2, PLCB3 or PLCB4), leading to production of diacylglycerol (DAG) and inositol 1,4,5-trisphosphate (IP3). Required for platelet activation. Regulates B-cell selection and survival and is required to prevent B-cell-dependent autoimmunity. Regulates chemotaxis of BM-derived neutrophils and dendritic cells (in vitro). Transduces FFAR4 signaling in response to long-chain fatty acids (LCFAs). Together with GNA11, required for heart development. In Rattus norvegicus (Rat), this protein is Guanine nucleotide-binding protein G(q) subunit alpha (Gnaq).